The following is a 303-amino-acid chain: Methionine import ATP-binding protein MetN (303 aa).

Positions 1–222 (MLDQISLEIP…PDPKMRHFLG (222 aa)) constitute an ABC transporter domain. ATP is bound at residue 19–26 (GHSGAGKS).

Belongs to the ABC transporter superfamily. Methionine importer (TC 3.A.1.24) family. The complex is composed of two ATP-binding proteins (MetN), two transmembrane proteins (MetI) and a solute-binding protein (MetQ).

Its subcellular location is the cell inner membrane. The enzyme catalyses L-methionine(out) + ATP + H2O = L-methionine(in) + ADP + phosphate + H(+). It catalyses the reaction D-methionine(out) + ATP + H2O = D-methionine(in) + ADP + phosphate + H(+). Functionally, part of the ABC transporter complex MetNIQ involved in methionine import. Responsible for energy coupling to the transport system. The protein is Methionine import ATP-binding protein MetN of Wolinella succinogenes (strain ATCC 29543 / DSM 1740 / CCUG 13145 / JCM 31913 / LMG 7466 / NCTC 11488 / FDC 602W) (Vibrio succinogenes).